The primary structure comprises 359 residues: Nicotinate-nucleotide--dimethylbenzimidazole phosphoribosyltransferase (359 aa).

Glu318 serves as the catalytic Proton acceptor.

This sequence belongs to the CobT family. In terms of assembly, homodimer.

The catalysed reaction is 5,6-dimethylbenzimidazole + nicotinate beta-D-ribonucleotide = alpha-ribazole 5'-phosphate + nicotinate + H(+). Its pathway is nucleoside biosynthesis; alpha-ribazole biosynthesis; alpha-ribazole from 5,6-dimethylbenzimidazole: step 1/2. Its function is as follows. Catalyzes the synthesis of alpha-ribazole-5'-phosphate from nicotinate mononucleotide (NAMN) and 5,6-dimethylbenzimidazole (DMB). This chain is Nicotinate-nucleotide--dimethylbenzimidazole phosphoribosyltransferase, found in Escherichia coli O81 (strain ED1a).